The sequence spans 133 residues: ATP synthase epsilon chain (133 aa).

Residues 103 to 133 form a disordered region; it reads VSQMEGQEPSTEKIKAQQNFNRARARVQATK.

It belongs to the ATPase epsilon chain family. F-type ATPases have 2 components, CF(1) - the catalytic core - and CF(0) - the membrane proton channel. CF(1) has five subunits: alpha(3), beta(3), gamma(1), delta(1), epsilon(1). CF(0) has three main subunits: a, b and c.

It localises to the cellular thylakoid membrane. Produces ATP from ADP in the presence of a proton gradient across the membrane. In Prochlorococcus marinus (strain MIT 9313), this protein is ATP synthase epsilon chain.